Consider the following 45-residue polypeptide: Photosystem II reaction center protein K (45 aa).

Positions 1-8 (MITAIIIA) are excised as a propeptide. Residues 23–43 (ILPVIPIFFLLLAFVWQAAIG) traverse the membrane as a helical segment.

This sequence belongs to the PsbK family. In terms of assembly, PSII is composed of 1 copy each of membrane proteins PsbA, PsbB, PsbC, PsbD, PsbE, PsbF, PsbH, PsbI, PsbJ, PsbK, PsbL, PsbM, PsbT, PsbX, PsbY, PsbZ, Psb30/Ycf12, at least 3 peripheral proteins of the oxygen-evolving complex and a large number of cofactors. It forms dimeric complexes.

The protein localises to the plastid. It localises to the chloroplast thylakoid membrane. In terms of biological role, one of the components of the core complex of photosystem II (PSII). PSII is a light-driven water:plastoquinone oxidoreductase that uses light energy to abstract electrons from H(2)O, generating O(2) and a proton gradient subsequently used for ATP formation. It consists of a core antenna complex that captures photons, and an electron transfer chain that converts photonic excitation into a charge separation. The chain is Photosystem II reaction center protein K from Gracilaria tenuistipitata var. liui (Red alga).